The primary structure comprises 202 residues: Transcriptional regulator GfcR 2 (202 aa).

The protein belongs to the purine/pyrimidine phosphoribosyltransferase family. GfcR subfamily.

This Methanosarcina barkeri (strain Fusaro / DSM 804) protein is Transcriptional regulator GfcR 2.